Reading from the N-terminus, the 757-residue chain is MALGEEKAEAEASEDTKAQSYGRGSCRERELDIPGPMSGEQPPRLEAEGGLISPVWGAEGIPAPTCWIGTDPGGPSRAHQPQASDANREPVAERSEPALSGLPPATMGSGDLLLSGESQVEKTKLSSSEEFPQTLSLPRTTTICSGHDADTEDDPSLADLPQALDLSQQPHSSGLSCLSQWKSVLSPGSAAQPSSCSISASSTGSSLQGHQERAEPRGGSLAKVSSSLEPVVPQEPSSVVGLGPRPQWSPQPVFSGGDASGLGRRRLSFQAEYWACVLPDSLPPSPDRHSPLWNPNKEYEDLLDYTYPLRPGPQLPKHLDSRVPADPVLQDSGVDLDSFSVSPASTLKSPTNVSPNCPPAEATALPFSGPREPSLKQWPSRVPQKQGGMGLASWSQLASTPRAPGSRDARWERREPALRGAKDRLTIGKHLDMGSPQLRTRDRGWPSPRPEREKRTSQSARRPTCTESRWKSEEEVESDDEYLALPARLTQVSSLVSYLGSISTLVTLPTGDIKGQSPLEVSDSDGPASFPSSSSQSQLPPGAALQGSGDPEGQNPCFLRSFVRAHDSAGEGSLGSSQALGVSSGLLKTRPSLPARLDRWPFSDPDVEGQLPRKGGEQGKESLVQCVKTFCCQLEELICWLYNVADVTDHGTAARSNLTSLKSSLQLYRQFKKDIDEHQSLTESVLQKGEILLQCLLENTPVLEDVLGRIAKQSGELESHADRLYDSILASLDMLAGCTLIPDKKPMAAMEHPCEGV.

Basic and acidic residues-rich tracts occupy residues 1-17 and 86-96; these read MALG…EDTK and ANREPVAERSE. 6 disordered regions span residues 1-47, 67-158, 192-259, 311-480, 509-551, and 597-618; these read MALG…RLEA, WIGT…PSLA, QPSS…GGDA, PGPQ…ESDD, PTGD…SGDP, and LDRW…GGEQ. The span at 125 to 144 shows a compositional bias: polar residues; it reads LSSSEEFPQTLSLPRTTTIC. 2 stretches are compositionally biased toward low complexity: residues 192 to 206 and 224 to 240; these read QPSS…TGSS and VSSS…SSVV. Serine 332 carries the phosphoserine; by PLK1 modification. Over residues 339 to 355 the composition is skewed to polar residues; the sequence is FSVSPASTLKSPTNVSP. Basic and acidic residues-rich tracts occupy residues 405–432 and 439–456; these read GSRD…KHLD and RTRD…EKRT. The segment covering 457-467 has biased composition (polar residues); the sequence is SQSARRPTCTE. Phosphoserine is present on residues serine 472 and serine 478. The segment covering 524–543 has biased composition (low complexity); that stretch reads SDGPASFPSSSSQSQLPPGA.

Interacts with CNTLN; the interaction recruits CEP68 to the centrosome. Interacts with the SCF(FBXW11) complex which contains SKP1, CUL1 and FBXW11; the interaction is probably mediated by FBXW11 and the complex also contains CDK5RAP2 and PCNT. Also interacts with F-box protein BTRC. Interacts with serine/threonine-protein kinase PLK1; the interaction leads to phosphorylation of CEP68 and its subsequent degradation. Interacts with NEK2; the interaction leads to phosphorylation of CEP68. Phosphorylation by PLK1 is required for binding to BTRC in prometaphase. Phosphorylated directly or indirectly by NEK2. NEK2-mediated phosphorylation promotes CEP68 dissociation from the centrosome and its degradation at the onset of mitosis. In terms of processing, ubiquitinated and targeted for proteasomal degradation in early mitosis by the SCF(BTRC) and/or SCF(FBXW11) E3 ubiquitin-protein ligase complexes. Degradation is complete by prometaphase and is required for removal of CDK5RAP2 from the peripheral pericentriolar material and subsequent centriole separation.

It is found in the cytoplasm. Its subcellular location is the cytoskeleton. It localises to the microtubule organizing center. The protein resides in the centrosome. Its function is as follows. Involved in maintenance of centrosome cohesion, probably as part of a linker structure which prevents centrosome splitting. Required for localization of CDK5RAP2 to the centrosome during interphase. Contributes to CROCC/rootletin filament formation. This chain is Centrosomal protein of 68 kDa (CEP68), found in Homo sapiens (Human).